A 218-amino-acid chain; its full sequence is GTP cyclohydrolase 1 (218 aa).

Positions 109, 112, and 180 each coordinate Zn(2+).

This sequence belongs to the GTP cyclohydrolase I family. As to quaternary structure, toroid-shaped homodecamer, composed of two pentamers of five dimers.

The catalysed reaction is GTP + H2O = 7,8-dihydroneopterin 3'-triphosphate + formate + H(+). Its pathway is cofactor biosynthesis; 7,8-dihydroneopterin triphosphate biosynthesis; 7,8-dihydroneopterin triphosphate from GTP: step 1/1. This Histophilus somni (strain 129Pt) (Haemophilus somnus) protein is GTP cyclohydrolase 1.